The sequence spans 124 residues: Small ribosomal subunit protein uS13 (124 aa).

The segment covering 103–117 (KCNARTRKGPRKTVA) has biased composition (basic residues). The interval 103–124 (KCNARTRKGPRKTVANKKIETK) is disordered.

The protein belongs to the universal ribosomal protein uS13 family. Part of the 30S ribosomal subunit. Forms a loose heterodimer with protein S19. Forms two bridges to the 50S subunit in the 70S ribosome.

In terms of biological role, located at the top of the head of the 30S subunit, it contacts several helices of the 16S rRNA. In the 70S ribosome it contacts the 23S rRNA (bridge B1a) and protein L5 of the 50S subunit (bridge B1b), connecting the 2 subunits; these bridges are implicated in subunit movement. Contacts the tRNAs in the A and P-sites. In Malacoplasma penetrans (strain HF-2) (Mycoplasma penetrans), this protein is Small ribosomal subunit protein uS13.